A 166-amino-acid polypeptide reads, in one-letter code: MTAGTVVITGGILATVILLCIIAVLCYCRLQYYCCKKDESEEDEEEPDFAVHSHLPPLHSNRNLVLTNGPALYPTASTSFSQKSPQARALCRSCSHCEPPTFFLQEPPEEEEDVLNGGERVLYKSVSQEDVELPPGGFGGLQALNPNRLSAMREAFARSRSISTDV.

The chain crosses the membrane as a helical span at residues 6–26 (VVITGGILATVILLCIIAVLC). A Phosphoserine modification is found at Ser-40.

This sequence belongs to the FAM163 family.

It is found in the membrane. This chain is Protein FAM163B (FAM163B), found in Homo sapiens (Human).